The chain runs to 190 residues: Endoribonuclease YbeY (190 aa).

The segment at 1–20 is disordered; it reads MDVENDRPPRRGAAGERNSG. The Zn(2+) site is built by His147, His151, and His157.

It belongs to the endoribonuclease YbeY family. It depends on Zn(2+) as a cofactor.

It localises to the cytoplasm. In terms of biological role, single strand-specific metallo-endoribonuclease involved in late-stage 70S ribosome quality control and in maturation of the 3' terminus of the 16S rRNA. This is Endoribonuclease YbeY from Nitrobacter hamburgensis (strain DSM 10229 / NCIMB 13809 / X14).